A 230-amino-acid polypeptide reads, in one-letter code: Ribonuclease 3 (230 aa).

The region spanning 5–125 (YSRFYNILGY…VIGAIYLDSD (121 aa)) is the RNase III domain. E40 is a binding site for Mg(2+). D44 is an active-site residue. D111 and E114 together coordinate Mg(2+). The active site involves E114. The DRBM domain occupies 153–223 (DSKSKLQEIL…AEKMIEMLSQ (71 aa)).

Belongs to the ribonuclease III family. Homodimer. Mg(2+) is required as a cofactor.

The protein localises to the cytoplasm. It carries out the reaction Endonucleolytic cleavage to 5'-phosphomonoester.. Digests double-stranded RNA. Involved in the processing of primary rRNA transcript to yield the immediate precursors to the large and small rRNAs (23S and 16S). Processes some mRNAs, and tRNAs when they are encoded in the rRNA operon. Processes pre-crRNA and tracrRNA of type II CRISPR loci if present in the organism. This chain is Ribonuclease 3, found in Francisella tularensis subsp. tularensis (strain FSC 198).